The sequence spans 433 residues: ATP-dependent protease ATPase subunit HslU (433 aa).

Residues Ile18, 60-65 (GVGKTE), Asp246, Glu311, and Arg383 contribute to the ATP site.

The protein belongs to the ClpX chaperone family. HslU subfamily. A double ring-shaped homohexamer of HslV is capped on each side by a ring-shaped HslU homohexamer. The assembly of the HslU/HslV complex is dependent on binding of ATP.

It is found in the cytoplasm. Functionally, ATPase subunit of a proteasome-like degradation complex; this subunit has chaperone activity. The binding of ATP and its subsequent hydrolysis by HslU are essential for unfolding of protein substrates subsequently hydrolyzed by HslV. HslU recognizes the N-terminal part of its protein substrates and unfolds these before they are guided to HslV for hydrolysis. The polypeptide is ATP-dependent protease ATPase subunit HslU (Cereibacter sphaeroides (strain KD131 / KCTC 12085) (Rhodobacter sphaeroides)).